A 199-amino-acid chain; its full sequence is Ras-related protein Rab-7b (199 aa).

Residues 15-22 (GALGVGKT), 34-40 (FEEYQTT), 63-67 (DTGGQ), 124-127 (NKID), and 154-155 (AK) each bind GTP. 2 short sequence motifs (switch) span residues 28-41 (YVHK…QTTL) and 67-82 (QERF…KGSD). The residue at position 186 (serine 186) is a Phosphoserine. S-geranylgeranyl cysteine attachment occurs at residues cysteine 198 and cysteine 199.

The protein belongs to the small GTPase superfamily. Rab family.

The protein resides in the late endosome. It localises to the lysosome. It is found in the golgi apparatus. The protein localises to the trans-Golgi network. Its subcellular location is the cytoplasmic vesicle. The protein resides in the phagosome. It localises to the phagosome membrane. In terms of biological role, controls vesicular trafficking from endosomes to the trans-Golgi network (TGN). Acts as a negative regulator of TLR9 signaling and can suppress TLR9-triggered TNFA, IL6, and IFNB production in macrophages by promoting TLR9 lysosomal degradation. Also negatively regulates TLR4 signaling in macrophages by promoting lysosomal degradation of TLR4. Promotes megakaryocytic differentiation by increasing NF-kappa-B-dependent IL6 production and subsequently enhancing the association of STAT3 with GATA1. Not involved in the regulation of the EGF- and EGFR degradation pathway. In Mus musculus (Mouse), this protein is Ras-related protein Rab-7b (Rab7b).